The primary structure comprises 817 residues: Fibroblast growth factor receptor 2 (817 aa).

The N-terminal stretch at 1-22 (MFARGWLLGALLLMTLATVSVA) is a signal peptide. Residues 23 to 377 (RPSLKIDLVN…ETDYPPDYVE (355 aa)) are Extracellular-facing. 3 consecutive Ig-like C2-type domains span residues 26 to 126 (LKID…VNVT), 159 to 247 (PEKM…YTLD), and 256 to 358 (PILQ…AWLT). N-linked (GlcNAc...) asparagine glycans are attached at residues N32, N84, and N124. C63 and C108 are disulfide-bonded. Residues 161-178 (KMEKKLHAVPAANTVKFR) are heparin-binding. C179 and C231 are disulfide-bonded. N228, N265, N297, N318, and N331 each carry an N-linked (GlcNAc...) asparagine glycan. The cysteines at positions 278 and 342 are disulfide-linked. Residues 378–398 (IAIYCIGVFLIACMVVIVVVC) traverse the membrane as a helical segment. At 399 to 817 (RMRTSAKKPD…YQHINGGIKT (419 aa)) the chain is on the cytoplasmic side. The tract at residues 429 to 465 (TVSSDSSSSMSSSTPLVRITTRRSSAHDDPIPEYDLP) is disordered. A compositionally biased stretch (low complexity) spans 431–441 (SSDSSSSMSSS). Y462 is subject to Phosphotyrosine; by autocatalysis. One can recognise a Protein kinase domain in the interval 477 to 766 (LTLGKPLGEG…LTLATNEEYL (290 aa)). Residues 483–491 (LGEGCFGQV), K513, 561–563 (EYA), and N567 contribute to the ATP site. Y582 bears the Phosphotyrosine; by autocatalysis mark. Residue D622 is the Proton acceptor of the active site. Phosphotyrosine; by autocatalysis is present on residues Y652, Y653, and Y765.

This sequence belongs to the protein kinase superfamily. Tyr protein kinase family. Fibroblast growth factor receptor subfamily. In terms of assembly, monomer. Homodimer after ligand binding. Autophosphorylated. Binding of FGF family members together with heparan sulfate proteoglycan or heparin promotes receptor dimerization and autophosphorylation on tyrosine residues. Autophosphorylation occurs in trans between the two FGFR molecules present in the dimer. In terms of processing, N-glycosylated in the endoplasmic reticulum. The N-glycan chains undergo further maturation to an Endo H-resistant form in the Golgi apparatus. Post-translationally, ubiquitinated. FGFR2 is rapidly ubiquitinated after autophosphorylation, leading to internalization and degradation. Subject to degradation both in lysosomes and by the proteasome.

The protein resides in the cell membrane. It is found in the golgi apparatus. Its subcellular location is the cytoplasmic vesicle. It catalyses the reaction L-tyrosyl-[protein] + ATP = O-phospho-L-tyrosyl-[protein] + ADP + H(+). Its activity is regulated as follows. Present in an inactive conformation in the absence of bound ligand. Ligand binding leads to dimerization and activation by autophosphorylation on tyrosine residues. Tyrosine-protein kinase that acts as a cell-surface receptor for fibroblast growth factors and plays an essential role in the regulation of cell proliferation, differentiation, migration and apoptosis, and in the regulation of embryonic development. Required for normal embryonic patterning, limb bud development, lung morphogenesis, osteogenesis and skin development. Plays an essential role in the regulation of osteoblast differentiation, proliferation and apoptosis, and is required for normal skeleton development. Promotes cell proliferation in keratinocytes and immature osteoblasts, but promotes apoptosis in differentiated osteoblasts. Phosphorylates PLCG1, FRS2 and PAK4. Ligand binding leads to the activation of several signaling cascades. Activation of PLCG1 leads to the production of the cellular signaling molecules diacylglycerol and inositol 1,4,5-trisphosphate. Phosphorylation of FRS2 triggers recruitment of GRB2, GAB1, PIK3R1 and SOS1, and mediates activation of RAS, MAPK1/ERK2, MAPK3/ERK1 and the MAP kinase signaling pathway, as well as of the AKT1 signaling pathway. FGFR2 signaling is down-regulated by ubiquitination, internalization and degradation. Mutations that lead to constitutive kinase activation or impair normal FGFR2 maturation, internalization and degradation lead to aberrant signaling. Over-expressed FGFR2 promotes activation of STAT1. The protein is Fibroblast growth factor receptor 2 (fgfr2) of Danio rerio (Zebrafish).